The primary structure comprises 234 residues: MNLSRFAPSPSSDSLISTLRPRAAVRRLHSNITGPMTPFKTAVNAYVASEGTDNSYVVRPRLYNDKRAQSDGSNALLSSIGPSGTTKRPRDEMDCFTDTHKHKRGDGNKSRRREQCRANQARYRDKQRNAQQQLERSVEQLQSELSTLKHRNLDLASRQRTNQSPWNTVAEVFRLLGVCFRSPWRVTCVQEMRNHSEMRQILAILERSFTHDVAMGDLRGIDALMEQLLQFSQY.

The disordered stretch occupies residues 67 to 134; the sequence is RAQSDGSNAL…DKQRNAQQQL (68 aa). Residues 70-86 are compositionally biased toward polar residues; the sequence is SDGSNALLSSIGPSGTT. Basic and acidic residues predominate over residues 88–128; it reads RPRDEMDCFTDTHKHKRGDGNKSRRREQCRANQARYRDKQR. Positions 106-169 constitute a bZIP domain; sequence DGNKSRRREQ…RTNQSPWNTV (64 aa). The segment at 109 to 128 is basic motif; it reads KSRRREQCRANQARYRDKQR. Residues 134-155 are leucine-zipper; sequence LERSVEQLQSELSTLKHRNLDL.

Belongs to the bZIP family. As to quaternary structure, interacts with PKZ1.

The protein localises to the nucleus. Its function is as follows. Required for normal zoospore movement, formation of appressoria by germinated zoospore cysts and plant infection. The chain is bZIP transcription factor 1 from Phytophthora infestans (Potato late blight agent).